The chain runs to 66 residues: Conotoxin Cal6.38 (66 aa).

Residues 1-22 (MKLTFVLIVAVLVLAVCNFTVA) form the signal peptide. Intrachain disulfides connect Cys-38-Cys-55, Cys-45-Cys-59, and Cys-54-Cys-64.

It belongs to the conotoxin O1 superfamily. Expressed by the venom duct.

It localises to the secreted. In terms of biological role, probable neurotoxin. The protein is Conotoxin Cal6.38 of Californiconus californicus (California cone).